The primary structure comprises 1142 residues: Protein kinase C-like (1142 aa).

In terms of domain architecture, REM-1 1 spans 1 to 67 (MNDEDKVHDI…LRELQMRRLG (67 aa)). Positions 70–139 (VDNMSLGASP…PPDSNVPRAR (70 aa)) are disordered. In terms of domain architecture, REM-1 2 spans 149–226 (KFDTPHLGPR…LKRYEELHID (78 aa)). The C2 domain occupies 231-349 (GPDDDSINLP…LRRKKIEAEM (119 aa)). Positions 357-403 (ADRVGSRAPPPQFPMGAQSPQFAAPPTSPGSQEQNTMIPPQAPPPSQ) are disordered. Over residues 385–394 (PGSQEQNTMI) the composition is skewed to polar residues. 2 Phorbol-ester/DAG-type zinc fingers span residues 457–505 (GHKF…VTKC) and 525–576 (PHRF…PDFC). Disordered regions lie at residues 592–622 (TQKK…SGSI) and 651–807 (SQTT…TDPG). Over residues 613-622 (SKTSISSGSI) the composition is skewed to polar residues. Composition is skewed to low complexity over residues 663 to 677 (TSTS…AAAA), 712 to 724 (SAQQ…SPQQ), and 741 to 765 (PQAR…MYQQ). In terms of domain architecture, Protein kinase spans 817–1076 (FNFLAVLGKG…AQEIMSQPFF (260 aa)). ATP-binding positions include 823–831 (LGKGNFGKV) and Lys846. Asp942 serves as the catalytic Proton acceptor. In terms of domain architecture, AGC-kinase C-terminal spans 1077 to 1142 (RNINWDDIYH…RGFSYTADFE (66 aa)).

The protein belongs to the protein kinase superfamily. AGC Ser/Thr protein kinase family. PKC subfamily.

The catalysed reaction is L-seryl-[protein] + ATP = O-phospho-L-seryl-[protein] + ADP + H(+). It carries out the reaction L-threonyl-[protein] + ATP = O-phospho-L-threonyl-[protein] + ADP + H(+). This chain is Protein kinase C-like, found in Neurospora crassa (strain ATCC 24698 / 74-OR23-1A / CBS 708.71 / DSM 1257 / FGSC 987).